A 130-amino-acid chain; its full sequence is MAKVQYMGTGRRKKSVARVRLVPGNGKVTINKREIETFFGLETLRVIVNQPLVLTGTKDKFDVLVNVHGGGFTGQAGAIRHGITRALVKSDETLRPELKKAGFLTRDPRMKERKKYGLKKARRAPQFSKR.

Over residues 99-110 (KKAGFLTRDPRM) the composition is skewed to basic and acidic residues. The tract at residues 99–130 (KKAGFLTRDPRMKERKKYGLKKARRAPQFSKR) is disordered. Residues 111–130 (KERKKYGLKKARRAPQFSKR) show a composition bias toward basic residues.

This sequence belongs to the universal ribosomal protein uS9 family.

The protein is Small ribosomal subunit protein uS9 of Clostridium botulinum (strain Alaska E43 / Type E3).